Consider the following 227-residue polypeptide: Small ribosomal subunit protein uS3 (227 aa).

Positions 39-107 (VRQLLQKRLK…PVHITIEEVR (69 aa)) constitute a KH type-2 domain.

Belongs to the universal ribosomal protein uS3 family. As to quaternary structure, part of the 30S ribosomal subunit. Forms a tight complex with proteins S10 and S14.

Functionally, binds the lower part of the 30S subunit head. Binds mRNA in the 70S ribosome, positioning it for translation. This chain is Small ribosomal subunit protein uS3, found in Coxiella burnetii (strain CbuK_Q154) (Coxiella burnetii (strain Q154)).